We begin with the raw amino-acid sequence, 98 residues long: MPSISINIILAFAAALLGMLMFRSHMMSSLLCLEGMMLSMFILSTLIISNTQLTMSFMMPIMLLVFSACEAAIGLALLVMVSNTYGLDYIQNLNLLKC.

3 helical membrane-spanning segments follow: residues 2–22 (PSISINIILAFAAALLGMLMF), 28–48 (SSLLCLEGMMLSMFILSTLII), and 61–81 (IMLLVFSACEAAIGLALLVMV).

It belongs to the complex I subunit 4L family. Core subunit of respiratory chain NADH dehydrogenase (Complex I) which is composed of 45 different subunits.

It localises to the mitochondrion inner membrane. It carries out the reaction a ubiquinone + NADH + 5 H(+)(in) = a ubiquinol + NAD(+) + 4 H(+)(out). Core subunit of the mitochondrial membrane respiratory chain NADH dehydrogenase (Complex I) which catalyzes electron transfer from NADH through the respiratory chain, using ubiquinone as an electron acceptor. Part of the enzyme membrane arm which is embedded in the lipid bilayer and involved in proton translocation. The protein is NADH-ubiquinone oxidoreductase chain 4L (MT-ND4L) of Allocebus trichotis (Hairy-eared dwarf lemur).